The primary structure comprises 126 residues: Major sperm protein 3 (126 aa).

Ala2 is subject to N-acetylalanine. One can recognise an MSP domain in the interval 8-125; that stretch reads DIATMPAQKV…RRKNLPIEYN (118 aa).

As to expression, sperm.

The protein resides in the cell projection. The protein localises to the pseudopodium. It localises to the cytoplasm. Its subcellular location is the cytoskeleton. Central component in molecular interactions underlying sperm crawling. Forms an extensive filament system that extends from sperm villipoda, along the leading edge of the pseudopod. The sequence is that of Major sperm protein 3 (MSP-3) from Globodera rostochiensis (Golden nematode worm).